Here is a 405-residue protein sequence, read N- to C-terminus: MSEQRALKNPYPDYTGLGCAQDLFDMQGNLTQHFATSISSKISELLAILENGLKNADPRDCTGYTGWAGIALLYLHLHSVFGDPTFLQRALDYVNRSLRSLTQRWVTFLCGDAGPLAIAAVVYHRLQKHQESDECLNRLLQLQPSVVQGKGRLPDELLYGRTGYLYSLIFVNQQFQQEKIPFQYIQQICDAILESGQILSQRNKIQDQSPLMYEWYQEEYVGAAHGLSGIYYYLMQPGLVAGQDRVFSLVKPSVNYVCQLKFPSGNYAPCVGDARDLLVHWCHGSPGVIYMLIQAFKVFGVRQYLEDALQCGEVIWQRGLLKKGYGLCHGAAGNAYGFLALYKITQDPKHLYRACMFADWCMNYGRHGCRTPDTPFSLFEGMAGTIYFLADLLQPARAKFPCFEV.

Cys-282 contributes to the Zn(2+) binding site. Lys-323 is a glutathione binding site. Residues Cys-328 and His-329 each coordinate Zn(2+). A glutathione-binding site is contributed by 370 to 373 (RTPD).

The protein belongs to the LanC-like protein family.

The protein localises to the cytoplasm. The protein resides in the cell membrane. It carries out the reaction RX + glutathione = an S-substituted glutathione + a halide anion + H(+). The catalysed reaction is 1-chloro-2,4-dinitrobenzene + glutathione = 2,4-dinitrophenyl-S-glutathione + chloride + H(+). Its function is as follows. Functions as a glutathione transferase. Catalyzes conjugation of the glutathione (GSH) to artificial substrates 1-chloro-2,4-dinitrobenzene (CDNB) and p-nitrophenyl acetate. Binds glutathione. This Danio rerio (Zebrafish) protein is Glutathione S-transferase LANCL1.